Here is a 158-residue protein sequence, read N- to C-terminus: Placenta growth factor (158 aa).

An N-terminal signal peptide occupies residues 1–18 (MLVMKLFTCFLQVLAGLA). 2 N-linked (GlcNAc...) asparagine glycosylation sites follow: Asn29 and Asn30. Disulfide bonds link Cys48/Cys90, Cys79/Cys125, and Cys83/Cys127. A glycan (N-linked (GlcNAc...) asparagine) is linked at Asn97. A disordered region spans residues 136–158 (AERRKTKGKRKRSRNSQTEEPHP). Residues 137–149 (ERRKTKGKRKRSR) show a composition bias toward basic residues.

The protein belongs to the PDGF/VEGF growth factor family. In terms of assembly, antiparallel homodimer; disulfide-linked. Also found as heterodimer with VEGFA/VEGF.

It is found in the secreted. Growth factor active in angiogenesis and endothelial cell growth, stimulating their proliferation and migration. It binds to the receptor FLT1/VEGFR-1. Also promotes cell tumor growth. The polypeptide is Placenta growth factor (Pgf) (Mus musculus (Mouse)).